A 259-amino-acid polypeptide reads, in one-letter code: Cytochrome c oxidase subunit 3 (259 aa).

Helical transmembrane passes span 13–33 (PWPL…ASWF), 36–56 (HGFL…IQWW), 80–100 (GMIL…WAFF), 125–145 (FSVP…VTWA), 160–180 (ALIL…GEYM), 195–215 (FFVA…FLAI), and 237–257 (AWYW…IYWW).

This sequence belongs to the cytochrome c oxidase subunit 3 family. In terms of assembly, component of the cytochrome c oxidase (complex IV, CIV), a multisubunit enzyme composed of a catalytic core of 3 subunits and several supernumerary subunits. The complex exists as a monomer or a dimer and forms supercomplexes (SCs) in the inner mitochondrial membrane with ubiquinol-cytochrome c oxidoreductase (cytochrome b-c1 complex, complex III, CIII).

It is found in the mitochondrion inner membrane. The catalysed reaction is 4 Fe(II)-[cytochrome c] + O2 + 8 H(+)(in) = 4 Fe(III)-[cytochrome c] + 2 H2O + 4 H(+)(out). In terms of biological role, component of the cytochrome c oxidase, the last enzyme in the mitochondrial electron transport chain which drives oxidative phosphorylation. The respiratory chain contains 3 multisubunit complexes succinate dehydrogenase (complex II, CII), ubiquinol-cytochrome c oxidoreductase (cytochrome b-c1 complex, complex III, CIII) and cytochrome c oxidase (complex IV, CIV), that cooperate to transfer electrons derived from NADH and succinate to molecular oxygen, creating an electrochemical gradient over the inner membrane that drives transmembrane transport and the ATP synthase. Cytochrome c oxidase is the component of the respiratory chain that catalyzes the reduction of oxygen to water. Electrons originating from reduced cytochrome c in the intermembrane space (IMS) are transferred via the dinuclear copper A center (CU(A)) of subunit 2 and heme A of subunit 1 to the active site in subunit 1, a binuclear center (BNC) formed by heme A3 and copper B (CU(B)). The BNC reduces molecular oxygen to 2 water molecules using 4 electrons from cytochrome c in the IMS and 4 protons from the mitochondrial matrix. The protein is Cytochrome c oxidase subunit 3 (COIII) of Lumbricus terrestris (Common earthworm).